Consider the following 439-residue polypeptide: 3-phosphoshikimate 1-carboxyvinyltransferase (439 aa).

Positions 21, 22, and 26 each coordinate 3-phosphoshikimate. A phosphoenolpyruvate-binding site is contributed by Lys21. Phosphoenolpyruvate-binding residues include Gly94 and Arg122. 3-phosphoshikimate is bound by residues Ser167, Gln169, Asp320, and Lys347. Position 169 (Gln169) interacts with phosphoenolpyruvate. The active-site Proton acceptor is the Asp320. Residues Arg351 and Arg395 each contribute to the phosphoenolpyruvate site.

The protein belongs to the EPSP synthase family. As to quaternary structure, monomer.

It is found in the cytoplasm. It carries out the reaction 3-phosphoshikimate + phosphoenolpyruvate = 5-O-(1-carboxyvinyl)-3-phosphoshikimate + phosphate. The protein operates within metabolic intermediate biosynthesis; chorismate biosynthesis; chorismate from D-erythrose 4-phosphate and phosphoenolpyruvate: step 6/7. Catalyzes the transfer of the enolpyruvyl moiety of phosphoenolpyruvate (PEP) to the 5-hydroxyl of shikimate-3-phosphate (S3P) to produce enolpyruvyl shikimate-3-phosphate and inorganic phosphate. The chain is 3-phosphoshikimate 1-carboxyvinyltransferase from Hyphomonas neptunium (strain ATCC 15444).